Consider the following 392-residue polypeptide: 23S rRNA (uracil(747)-C(5))-methyltransferase RlmC (392 aa).

Residues C4, C12, C15, and C93 each coordinate [4Fe-4S] cluster. S-adenosyl-L-methionine is bound by residues Q218, F247, E275, and N321. Residue C348 is the Nucleophile of the active site.

It belongs to the class I-like SAM-binding methyltransferase superfamily. RNA M5U methyltransferase family. RlmC subfamily.

The enzyme catalyses uridine(747) in 23S rRNA + S-adenosyl-L-methionine = 5-methyluridine(747) in 23S rRNA + S-adenosyl-L-homocysteine + H(+). Functionally, catalyzes the formation of 5-methyl-uridine at position 747 (m5U747) in 23S rRNA. The sequence is that of 23S rRNA (uracil(747)-C(5))-methyltransferase RlmC from Haemophilus influenzae (strain 86-028NP).